We begin with the raw amino-acid sequence, 273 residues long: Large ribosomal subunit protein uL2cz/uL2cy (273 aa).

2 disordered regions span residues Met-1 to Lys-23 and Asn-223 to Lys-273.

Belongs to the universal ribosomal protein uL2 family. As to quaternary structure, part of the 50S ribosomal subunit.

The protein localises to the plastid. The protein resides in the chloroplast. The protein is Large ribosomal subunit protein uL2cz/uL2cy (rpl2-A) of Oenothera argillicola (Appalachian evening primrose).